The following is a 735-amino-acid chain: Putative RNA polymerase II subunit B1 CTD phosphatase RPAP2 homolog (735 aa).

The RTR1-type zinc finger occupies 33–118 (AARKLMSRSD…LQEARTLEFD (86 aa)). Residues C56, C61, C94, and C98 each coordinate Zn(2+). Disordered regions lie at residues 179-201 (VPFD…QEKH), 349-374 (GKNT…KSRK), and 519-538 (EHSE…WPNK). The segment covering 349-364 (GKNTLSGSSSGSNTKG) has biased composition (low complexity). The span at 519–530 (EHSEEEMTEEEP) shows a compositional bias: acidic residues.

The protein belongs to the RPAP2 family.

It is found in the nucleus. The enzyme catalyses O-phospho-L-seryl-[protein] + H2O = L-seryl-[protein] + phosphate. It carries out the reaction O-phospho-L-threonyl-[protein] + H2O = L-threonyl-[protein] + phosphate. Functionally, putative RNA polymerase II subunit B1 C-terminal domain (CTD) phosphatase involved in RNA polymerase II transcription regulation. This is Putative RNA polymerase II subunit B1 CTD phosphatase RPAP2 homolog from Arabidopsis thaliana (Mouse-ear cress).